A 108-amino-acid polypeptide reads, in one-letter code: Nucleoid-associated protein GK0018 (108 aa).

The segment at 1–32 (MMRGGMGNMQKMLKQMQKMQKEMQKAQEELAE) is disordered. A compositionally biased stretch (low complexity) spans 9-18 (MQKMLKQMQK). Residues 19–32 (MQKEMQKAQEELAE) show a composition bias toward basic and acidic residues.

This sequence belongs to the YbaB/EbfC family. In terms of assembly, homodimer.

The protein localises to the cytoplasm. Its subcellular location is the nucleoid. Its function is as follows. Binds to DNA and alters its conformation. May be involved in regulation of gene expression, nucleoid organization and DNA protection. The polypeptide is Nucleoid-associated protein GK0018 (Geobacillus kaustophilus (strain HTA426)).